Consider the following 152-residue polypeptide: Large ribosomal subunit protein bL9 (152 aa).

The protein belongs to the bacterial ribosomal protein bL9 family.

Functionally, binds to the 23S rRNA. This is Large ribosomal subunit protein bL9 from Prochlorococcus marinus (strain MIT 9313).